Reading from the N-terminus, the 247-residue chain is Carboxy-S-adenosyl-L-methionine synthase (247 aa).

S-adenosyl-L-methionine is bound by residues Tyr-39, 64 to 66 (GCS), 89 to 90 (DN), 117 to 118 (DI), Asn-132, and Arg-199.

Belongs to the class I-like SAM-binding methyltransferase superfamily. Cx-SAM synthase family. Homodimer.

The catalysed reaction is prephenate + S-adenosyl-L-methionine = carboxy-S-adenosyl-L-methionine + 3-phenylpyruvate + H2O. In terms of biological role, catalyzes the conversion of S-adenosyl-L-methionine (SAM) to carboxy-S-adenosyl-L-methionine (Cx-SAM). This Salmonella agona (strain SL483) protein is Carboxy-S-adenosyl-L-methionine synthase.